A 1339-amino-acid chain; its full sequence is Receptor tyrosine-protein kinase erbB-3 (1339 aa).

A signal peptide spans 1 to 19 (MSAIGTLQVLGFLLSLARG). The Extracellular portion of the chain corresponds to 20–641 (SEMGNSQAVC…QAEVLMSKPH (622 aa)). Asn-126 carries an N-linked (GlcNAc...) asparagine glycan. Cystine bridges form between Cys-186–Cys-194, Cys-190–Cys-202, Cys-210–Cys-218, Cys-214–Cys-226, Cys-227–Cys-235, Cys-231–Cys-243, Cys-246–Cys-255, Cys-259–Cys-286, Cys-290–Cys-301, Cys-305–Cys-320, and Cys-323–Cys-327. Asn-250 carries N-linked (GlcNAc...) asparagine glycosylation. Asn-353, Asn-408, Asn-414, Asn-437, and Asn-469 each carry an N-linked (GlcNAc...) asparagine glycan. 10 disulfides stabilise this stretch: Cys-500–Cys-509, Cys-504–Cys-517, Cys-520–Cys-529, Cys-533–Cys-549, Cys-552–Cys-565, Cys-556–Cys-573, Cys-576–Cys-585, Cys-589–Cys-610, Cys-613–Cys-621, and Cys-617–Cys-629. Residue Asn-522 is glycosylated (N-linked (GlcNAc...) asparagine). Asn-566 carries N-linked (GlcNAc...) asparagine glycosylation. N-linked (GlcNAc...) asparagine glycosylation is present at Asn-616. The helical transmembrane segment at 642–662 (LVIAVTVGLTVIFLILGGSFL) threads the bilayer. The Cytoplasmic portion of the chain corresponds to 663–1339 (YWRGRRIQNK…LFPKANAQRI (677 aa)). Ser-684 is subject to Phosphoserine. Residues 707–964 (LRKLKVLGSG…TFKELANEFT (258 aa)) form the Protein kinase domain. Residues 713-721 (LGSGVFGTV), Lys-740, 786-788 (QYL), and 832-837 (DLALRN) each bind ATP. The active-site Proton acceptor is the Asp-832. Phosphoserine is present on Ser-980. Disordered regions lie at residues 1028 to 1052 (LSLP…SGYM), 1077 to 1156 (RPIS…GNGY), and 1181 to 1212 (SVLG…PRPG). Residues 1185–1195 (TEEEDEDEEYE) show a composition bias toward acidic residues.

Belongs to the protein kinase superfamily. Tyr protein kinase family. EGF receptor subfamily. As to quaternary structure, monomer and homodimer. Heterodimer with each of the other ERBB receptors (Potential). Interacts with CSPG5, PA2G4, GRB7 and MUC1. Interacts with MYOC. Found in a ternary complex with NRG1 and ITGAV:ITGB3 or ITGA6:ITGB4. Autophosphorylated. Ligand-binding increases phosphorylation on tyrosine residues and promotes its association with the p85 subunit of phosphatidylinositol 3-kinase. In terms of tissue distribution, in the muscle, expression localizes to the synaptic sites of muscle fibers.

Its subcellular location is the membrane. It carries out the reaction L-tyrosyl-[protein] + ATP = O-phospho-L-tyrosyl-[protein] + ADP + H(+). Tyrosine-protein kinase that plays an essential role as cell surface receptor for neuregulins. Binds to neuregulin-1 (NRG1) and is activated by it; ligand-binding increases phosphorylation on tyrosine residues and promotes its association with the p85 subunit of phosphatidylinositol 3-kinase. May also be activated by CSPG5. Involved in the regulation of myeloid cell differentiation. The protein is Receptor tyrosine-protein kinase erbB-3 (Erbb3) of Mus musculus (Mouse).